The following is a 122-amino-acid chain: Histone H2B (122 aa).

Residues 1 to 31 (MPPKPSGKGQKKAGKAKGAPSTNKKRKRKRK) are disordered. At proline 2 the chain carries N,N-dimethylproline. Glutamine 10 is covalently cross-linked (Isoglutamyl lysine isopeptide (Gln-Lys) (interchain with K-5 in histone H4)). The O-linked (GlcNAc) serine glycan is linked to serine 109. A Glycyl lysine isopeptide (Lys-Gly) (interchain with G-Cter in ubiquitin) cross-link involves residue lysine 117.

The protein belongs to the histone H2B family. The nucleosome is a histone octamer containing two molecules each of H2A, H2B, H3 and H4 assembled in one H3-H4 heterotetramer and two H2A-H2B heterodimers. The octamer wraps approximately 147 bp of DNA. Monoubiquitination of Lys-117 gives a specific tag for epigenetic transcriptional activation and is also prerequisite for histone H3 'Lys-4' and 'Lys-79' methylation. Post-translationally, glcNAcylation at Ser-109 promotes monoubiquitination of Lys-117. It fluctuates in response to extracellular glucose, and associates with transcribed genes.

Its subcellular location is the nucleus. The protein localises to the chromosome. In terms of biological role, core component of nucleosome. Nucleosomes wrap and compact DNA into chromatin, limiting DNA accessibility to the cellular machineries which require DNA as a template. Histones thereby play a central role in transcription regulation, DNA repair, DNA replication and chromosomal stability. DNA accessibility is regulated via a complex set of post-translational modifications of histones, also called histone code, and nucleosome remodeling. This Patiria pectinifera (Starfish) protein is Histone H2B.